We begin with the raw amino-acid sequence, 427 residues long: Mitogen-activated protein kinase 8 (427 aa).

Residues 26–321 (YQNLKPIGSG…VDEALQHPYI (296 aa)) enclose the Protein kinase domain. ATP is bound by residues 32 to 40 (IGSGAQGIV) and K55. C116 is modified (S-nitrosocysteine). The Proton acceptor role is filled by D151. Phosphothreonine; by MAP2K7 is present on T183. A TXY motif is present at residues 183-185 (TPY). Y185 carries the post-translational modification Phosphotyrosine; by MAP2K4. 2 positions are modified to phosphoserine: M301 and S377. A disordered region spans residues 371 to 427 (VIRGQPSPLGAAVINGSQHPSSSSSVNDVSSMSTDPTLASDTDSSLEAAAGPLGCCR). Residues 387–403 (SQHPSSSSSVNDVSSMS) are compositionally biased toward low complexity. Polar residues predominate over residues 404–415 (TDPTLASDTDSS).

It belongs to the protein kinase superfamily. CMGC Ser/Thr protein kinase family. MAP kinase subfamily. Forms a complex with MAPK8IP1 and ARHGEF28. Found in a complex with SH3RF1, RAC1, MAP3K11/MLK3, MAP2K7/MKK7 and MAPK8IP1/JIP1. Found in a complex with SH3RF1, RAC2, MAP3K7/TAK1, MAP2K7/MKK7, MAPK8IP1/JIP1 and MAPK9/JNK2. Binds to at least four scaffolding proteins, MAPK8IP1/JIP-1, MAPK8IP2/JIP-2, MAPK8IP3/JIP-3/JSAP1 and SPAG9/MAPK8IP4/JIP-4. These proteins also bind other components of the JNK signaling pathway. Interacts with TP53 and WWOX. Interacts with JAMP. Interacts with HSF1 (via D domain and preferentially with hyperphosphorylated form); this interaction occurs under both normal growth conditions and immediately upon heat shock. Interacts (phosphorylated form) with NFE2; the interaction phosphorylates NFE2 in undifferentiated cells. Interacts with NFATC4. Interacts with MECOM; regulates JNK signaling. Interacts with PIN1; this interaction mediates MAPK8 conformational changes leading to the binding of MAPK8 to its substrates. Interacts with GRIPAP1. Interacts with POU5F1; phosphorylates POU5F1 at 'Ser-355'. Interacts with STMN2, STMN3 and STMN4. Interacts with HSF4. Requires Mg(2+) as cofactor. Dually phosphorylated on Thr-183 and Tyr-185 by MAP2K7 and MAP2K4, which activates the enzyme. Phosphorylated by TAOK2. May be phosphorylated at Thr-183 and Tyr-185 by MAP3K1/MEKK1. Phosphorylated form is more concentrated at synapses than none-phosphorylated.

It is found in the cytoplasm. It localises to the nucleus. The protein resides in the synapse. It catalyses the reaction L-seryl-[protein] + ATP = O-phospho-L-seryl-[protein] + ADP + H(+). It carries out the reaction L-threonyl-[protein] + ATP = O-phospho-L-threonyl-[protein] + ADP + H(+). Activated by threonine and tyrosine phosphorylation by either of two dual specificity kinases, MAP2K4 and MAP2K7. MAP2K4 shows a strong preference for Tyr-185 while MAP2K7 phosphorylates Tyr-183 preferentially. Inhibited by dual specificity phosphatases, such as DUSP1. Inhibited by SERPINB3. Its function is as follows. Serine/threonine-protein kinase involved in various processes such as cell proliferation, differentiation, migration, transformation and programmed cell death. Extracellular stimuli such as pro-inflammatory cytokines or physical stress stimulate the stress-activated protein kinase/c-Jun N-terminal kinase (SAP/JNK) signaling pathway. In this cascade, two dual specificity kinases MAP2K4/MKK4 and MAP2K7/MKK7 phosphorylate and activate MAPK8/JNK1. In turn, MAPK8/JNK1 phosphorylates a number of transcription factors, primarily components of AP-1 such as JUN, JDP2 and ATF2 and thus regulates AP-1 transcriptional activity. Phosphorylates the replication licensing factor CDT1, inhibiting the interaction between CDT1 and the histone H4 acetylase HBO1 to replication origins. Loss of this interaction abrogates the acetylation required for replication initiation. Promotes stressed cell apoptosis by phosphorylating key regulatory factors including p53/TP53 and Yes-associates protein YAP1. In T-cells, MAPK8 and MAPK9 are required for polarized differentiation of T-helper cells into Th1 cells. Contributes to the survival of erythroid cells by phosphorylating the antagonist of cell death BAD upon EPO stimulation. Mediates starvation-induced BCL2 phosphorylation, BCL2 dissociation from BECN1, and thus activation of autophagy. Phosphorylates STMN2 and hence regulates microtubule dynamics, controlling neurite elongation in cortical neurons. In the developing brain, through its cytoplasmic activity on STMN2, negatively regulates the rate of exit from multipolar stage and of radial migration from the ventricular zone. Phosphorylates several other substrates including heat shock factor protein 4 (HSF4), the deacetylase SIRT1, ELK1, or the E3 ligase ITCH. Phosphorylates the CLOCK-BMAL1 heterodimer and plays a role in the regulation of the circadian clock. Phosphorylates the heat shock transcription factor HSF1, suppressing HSF1-induced transcriptional activity. Phosphorylates POU5F1, which results in the inhibition of POU5F1's transcriptional activity and enhances its proteasomal degradation. Phosphorylates JUND and this phosphorylation is inhibited in the presence of MEN1. In neurons, phosphorylates SYT4 which captures neuronal dense core vesicles at synapses. Phosphorylates EIF4ENIF1/4-ET in response to oxidative stress, promoting P-body assembly. Phosphorylates SIRT6 in response to oxidative stress, stimulating its mono-ADP-ribosyltransferase activity. Phosphorylates NLRP3, promoting assembly of the NLRP3 inflammasome. Phosphorylates ALKBH5 in response to reactive oxygen species (ROS), promoting ALKBH5 sumoylation and inactivation. In terms of biological role, JNK1 isoforms display different binding patterns: beta-1 preferentially binds to c-Jun, whereas alpha-1, alpha-2, and beta-2 have a similar low level of binding to both c-Jun or ATF2. However, there is no correlation between binding and phosphorylation, which is achieved at about the same efficiency by all isoforms. This chain is Mitogen-activated protein kinase 8 (MAPK8), found in Homo sapiens (Human).